A 393-amino-acid polypeptide reads, in one-letter code: Uroporphyrinogen decarboxylase, chloroplastic (393 aa).

The interval 1–64 (MATACPPLSL…AGERNQREEV (64 aa)) is disordered. Residues 23 to 37 (AGPNAGSSRPSAAAP) are compositionally biased toward low complexity. Residues 38–50 (SERRSWRRPRPDG) are compositionally biased toward basic and acidic residues. Residues 73–77 (RQAGR), phenylalanine 92, serine 122, aspartate 123, tyrosine 200, serine 255, and histidine 370 each bind substrate.

This sequence belongs to the uroporphyrinogen decarboxylase family. In terms of assembly, homodimer.

The protein resides in the plastid. It is found in the chloroplast. It carries out the reaction uroporphyrinogen III + 4 H(+) = coproporphyrinogen III + 4 CO2. Its pathway is porphyrin-containing compound metabolism; protoporphyrin-IX biosynthesis; coproporphyrinogen-III from 5-aminolevulinate: step 4/4. Functionally, catalyzes the decarboxylation of four acetate groups of uroporphyrinogen-III to yield coproporphyrinogen-III. This Zea mays (Maize) protein is Uroporphyrinogen decarboxylase, chloroplastic (LES22).